The sequence spans 507 residues: MSGLASKAKSRVKSSKGKNSTNIHADELNEDVGVVVRVMTAVVDVKFASGKIPKILNALESKEIYNGKKLVLEVSQHISDSIVRCIALDGTDGLSRNDKFIDTGAPISVPVGRGTLGRVFDVLGNTIDECGPLEESSYFIKQIYSEIPKLTDQKIATEILVTGIKVIDLLAPYLKGGKVGLFGGAGVGKTVLIMELIHNIAKAHKGVSVFAGVGERTREGNDLYHEMIESGVINLENKDQSQAVLVYGQMNEPPGARLRVALSALTMAEYFRDAENQDVLFFVDNIFRFTQSGSEISALLGRIPSAVGYQPTLAAEMGAMQERITSTNSGSITSVQAIYVPADDLTDPAPATSFAHLDSTTVLSRQISELGIYPAVDPLDSTSQALSADVVGKEHYDVAKEVQRILQTYKSLQDIIAILGMDELSEEDKLIVARARKIQRFLSQPFHVAEVFTGAPGKFVSLEDTVLSFKGLVEGKYDHLPEAAFYMVGSIDDVIKKAELLQKEGKV.

Residues 1–22 (MSGLASKAKSRVKSSKGKNSTN) form a disordered region. 183–190 (GGAGVGKT) lines the ATP pocket.

The protein belongs to the ATPase alpha/beta chains family. In terms of assembly, F-type ATPases have 2 components, CF(1) - the catalytic core - and CF(0) - the membrane proton channel. CF(1) has five subunits: alpha(3), beta(3), gamma(1), delta(1), epsilon(1). CF(0) has three main subunits: a(1), b(2) and c(9-12). The alpha and beta chains form an alternating ring which encloses part of the gamma chain. CF(1) is attached to CF(0) by a central stalk formed by the gamma and epsilon chains, while a peripheral stalk is formed by the delta and b chains.

It localises to the cell inner membrane. It carries out the reaction ATP + H2O + 4 H(+)(in) = ADP + phosphate + 5 H(+)(out). Produces ATP from ADP in the presence of a proton gradient across the membrane. The catalytic sites are hosted primarily by the beta subunits. The polypeptide is ATP synthase subunit beta (Ehrlichia chaffeensis (strain ATCC CRL-10679 / Arkansas)).